The following is a 156-amino-acid chain: MPRKGNVPKREVLADPIHGSMVVAKLINSVMLDGKKGTAQNIVYGAFDIIKERAEENPVEVFEKAMNNIMPVLEVKARRVGGANYQVPIEVRPERRQTLGLRWLVKYTRARGEKGMIEKLAKEIMDAANNTGSSVKKKEDTHKMAEANKAFAHYRW.

Belongs to the universal ribosomal protein uS7 family. As to quaternary structure, part of the 30S ribosomal subunit. Contacts proteins S9 and S11.

Functionally, one of the primary rRNA binding proteins, it binds directly to 16S rRNA where it nucleates assembly of the head domain of the 30S subunit. Is located at the subunit interface close to the decoding center, probably blocks exit of the E-site tRNA. This chain is Small ribosomal subunit protein uS7, found in Alkaliphilus metalliredigens (strain QYMF).